The sequence spans 186 residues: MGLKADNWIKKMALEHNMIEPFCEANIGKGIVSYGLSSYGYDIRVGREFKIFTNVNSTVVDPKNFVEENVVDFVGDVCIVPANSFALARTVEYFKMPNDVLAICLGKSTYARCGIIVNVTPFEPGFEGHITIEISNTTPLPAKIYANEGIAQVLFLQGDEPCDVTYADKKGKYQAQTGITLPRILK.

107–112 (KSTYAR) serves as a coordination point for dCTP. Glutamate 133 functions as the Proton donor/acceptor in the catalytic mechanism. Residues glutamine 152, tyrosine 166, and glutamine 176 each coordinate dCTP.

The protein belongs to the dCTP deaminase family. Homotrimer.

The catalysed reaction is dCTP + H2O + H(+) = dUTP + NH4(+). The protein operates within pyrimidine metabolism; dUMP biosynthesis; dUMP from dCTP (dUTP route): step 1/2. Its function is as follows. Catalyzes the deamination of dCTP to dUTP. The sequence is that of dCTP deaminase from Campylobacter lari (strain RM2100 / D67 / ATCC BAA-1060).